A 434-amino-acid polypeptide reads, in one-letter code: Glutamate-1-semialdehyde 2,1-aminomutase (434 aa).

Lys-274 bears the N6-(pyridoxal phosphate)lysine mark.

This sequence belongs to the class-III pyridoxal-phosphate-dependent aminotransferase family. HemL subfamily. As to quaternary structure, homodimer. Pyridoxal 5'-phosphate is required as a cofactor.

The protein resides in the cytoplasm. It catalyses the reaction (S)-4-amino-5-oxopentanoate = 5-aminolevulinate. It participates in porphyrin-containing compound metabolism; protoporphyrin-IX biosynthesis; 5-aminolevulinate from L-glutamyl-tRNA(Glu): step 2/2. The chain is Glutamate-1-semialdehyde 2,1-aminomutase from Acidovorax sp. (strain JS42).